Here is a 506-residue protein sequence, read N- to C-terminus: NAD(P)H-quinone oxidoreductase subunit 2 (506 aa).

The next 13 helical transmembrane spans lie at 14–34, 42–62, 79–99, 108–128, 132–152, 167–187, 206–226, 240–260, 276–296, 302–322, 330–350, 374–394, and 409–429; these read AIIPEAFILLGIVGTLLVDLA, WAPIICYLSIGSSLLSLALQW, LAISFRAIISLSTLVSLLISW, PIGEFAAIVLSATLGAMLLCG, LISVFISLETLSVASYLLSGY, LLVGSAAAAVYLYGSSFLYGL, FITSLALVFVLSTVAFKIAAV, PTPVVAFLSVGSKTAGFAFAI, LLFTILAILSMALGNVVALAQ, MLAYSSIGQAGFVMIGIVSGT, VLYLAAYLFMNLGAFSCVILF, LGLSLCLLSLGGLPPMLGFFG, and LLVIVGLVTSVISIYYYISVI.

The protein belongs to the complex I subunit 2 family. In terms of assembly, NDH-1 can be composed of about 15 different subunits; different subcomplexes with different compositions have been identified which probably have different functions.

It is found in the cellular thylakoid membrane. It carries out the reaction a plastoquinone + NADH + (n+1) H(+)(in) = a plastoquinol + NAD(+) + n H(+)(out). It catalyses the reaction a plastoquinone + NADPH + (n+1) H(+)(in) = a plastoquinol + NADP(+) + n H(+)(out). In terms of biological role, NDH-1 shuttles electrons from an unknown electron donor, via FMN and iron-sulfur (Fe-S) centers, to quinones in the respiratory and/or the photosynthetic chain. The immediate electron acceptor for the enzyme in this species is believed to be plastoquinone. Couples the redox reaction to proton translocation, and thus conserves the redox energy in a proton gradient. Cyanobacterial NDH-1 also plays a role in inorganic carbon-concentration. In Prochlorococcus marinus (strain MIT 9215), this protein is NAD(P)H-quinone oxidoreductase subunit 2.